We begin with the raw amino-acid sequence, 1220 residues long: Post-transcriptional regulator MKT1L (1220 aa).

The disordered stretch occupies residues 1 to 107; sequence MRKAGANRNN…SPWNSPPQQT (107 aa). Basic residues predominate over residues 34-70; it reads PHHHQHQHHHQHQHQHQHQHQHPHQHPHQHHHHHPHH.

The protein belongs to the XPG/RAD2 endonuclease family. As to quaternary structure, forms a complex composed of at least MKT1L, PBP1, XAC1 and LSM12.

It is found in the cytoplasm. Functionally, involved in post-transcriptional regulation of gene expression. This Trypanosoma brucei brucei (strain 927/4 GUTat10.1) protein is Post-transcriptional regulator MKT1L.